Consider the following 394-residue polypeptide: Flap endonuclease 1 (394 aa).

The interval 1–104 is N-domain; sequence MGIKQLFSVI…GELAKRFQRK (104 aa). Mg(2+) is bound at residue aspartate 34. Arginine 47 and arginine 70 together coordinate DNA. Positions 86, 158, 160, 179, and 181 each coordinate Mg(2+). The interval 122–253 is I-domain; that stretch reads DVEKFSRRTV…STALKLIREH (132 aa). Glutamate 158 contributes to the DNA binding site. Residues glycine 231 and aspartate 233 each contribute to the DNA site. Aspartate 233 contacts Mg(2+). The tract at residues 341–349 is interaction with PCNA; the sequence is QQARIEGFF. Residues 356-383 are compositionally biased toward basic and acidic residues; the sequence is EEEKKAHKRKLEEQAEQKRKKVKEEKKE. The segment at 356–394 is disordered; sequence EEEKKAHKRKLEEQAEQKRKKVKEEKKEKAKLKAKPRGA. Positions 384–394 are enriched in basic residues; that stretch reads KAKLKAKPRGA.

It belongs to the XPG/RAD2 endonuclease family. FEN1 subfamily. As to quaternary structure, interacts with PCNA. Three molecules of dnr-8/fen1 bind to one PCNA trimer with each molecule binding to one PCNA monomer. PCNA stimulates the nuclease activity without altering cleavage specificity. Mg(2+) is required as a cofactor. Post-translationally, phosphorylated. Phosphorylation upon DNA damage induces relocalization to the nuclear plasma.

Its subcellular location is the nucleus. It is found in the nucleolus. It localises to the nucleoplasm. The protein localises to the mitochondrion. In terms of biological role, structure-specific nuclease with 5'-flap endonuclease and 5'-3' exonuclease activities involved in DNA replication and repair. During DNA replication, cleaves the 5'-overhanging flap structure that is generated by displacement synthesis when DNA polymerase encounters the 5'-end of a downstream Okazaki fragment. It enters the flap from the 5'-end and then tracks to cleave the flap base, leaving a nick for ligation. Also involved in the long patch base excision repair (LP-BER) pathway, by cleaving within the apurinic/apyrimidinic (AP) site-terminated flap. Acts as a genome stabilization factor that prevents flaps from equilibrating into structures that lead to duplications and deletions. Also possesses 5'-3' exonuclease activity on nicked or gapped double-stranded DNA, and exhibits RNase H activity. Also involved in replication and repair of rDNA and in repairing mitochondrial DNA. This is Flap endonuclease 1 (dnr-8) from Neurospora crassa (strain ATCC 24698 / 74-OR23-1A / CBS 708.71 / DSM 1257 / FGSC 987).